Here is a 622-residue protein sequence, read N- to C-terminus: Low affinity potassium transport system protein Kup (622 aa).

The next 12 membrane-spanning stretches (helical) occupy residues 9 to 29 (LPAITLAAIGVVYGDIGTSPL), 49 to 69 (VFGFLSLIFWLLIFVVSIKYL), 103 to 123 (VIMGLIGGSFFYGEVVITPAI), 137 to 157 (PQLDTWIVPLSIIVLTLLFMI), 165 to 185 (VGKLFAPIMLTWFLILAGLGL), 213 to 233 (VSFIALGAVVLSITGVEALYA), 247 to 267 (WFTVVLPSLTLNYFGQGALLL), 276 to 296 (PFFLLAPDWALIPLLIIAALA), 337 to 357 (IYIPFVNWMLYVAVVIVIVSF), 363 to 383 (LAAAYGIAVTGTMVLTSILST), 396 to 416 (FVALILIAFLCVDIPLFTANL), and 419 to 439 (LLSGGWLPLSLGTVMFIVMTT).

Belongs to the HAK/KUP transporter (TC 2.A.72) family.

It localises to the cell inner membrane. The catalysed reaction is K(+)(in) + H(+)(in) = K(+)(out) + H(+)(out). In terms of biological role, responsible for the low-affinity transport of potassium into the cell. Likely operates as a K(+):H(+) symporter. This chain is Low affinity potassium transport system protein Kup, found in Escherichia coli (strain K12 / MC4100 / BW2952).